Consider the following 549-residue polypeptide: Probable protein kinase UbiB (549 aa).

The region spanning 123–501 (DFNETPLASA…QQQAHKSNYL (379 aa)) is the Protein kinase domain. ATP contacts are provided by residues 129–137 (LASASISQV) and Lys152. The active-site Proton acceptor is Asp287. The next 2 membrane-spanning stretches (helical) occupy residues 496–516 (HKSNYLLITSAVLLICGTLLI) and 520–540 (ATLWTPYVCLVSGIILWFVGW).

This sequence belongs to the ABC1 family. UbiB subfamily.

It is found in the cell inner membrane. It participates in cofactor biosynthesis; ubiquinone biosynthesis [regulation]. Functionally, is probably a protein kinase regulator of UbiI activity which is involved in aerobic coenzyme Q (ubiquinone) biosynthesis. The protein is Probable protein kinase UbiB of Shewanella baltica (strain OS185).